The chain runs to 361 residues: S-adenosylmethionine:tRNA ribosyltransferase-isomerase (361 aa).

Belongs to the QueA family. Monomer.

The protein localises to the cytoplasm. It catalyses the reaction 7-aminomethyl-7-carbaguanosine(34) in tRNA + S-adenosyl-L-methionine = epoxyqueuosine(34) in tRNA + adenine + L-methionine + 2 H(+). It participates in tRNA modification; tRNA-queuosine biosynthesis. Functionally, transfers and isomerizes the ribose moiety from AdoMet to the 7-aminomethyl group of 7-deazaguanine (preQ1-tRNA) to give epoxyqueuosine (oQ-tRNA). This is S-adenosylmethionine:tRNA ribosyltransferase-isomerase from Actinobacillus pleuropneumoniae serotype 3 (strain JL03).